The following is a 192-amino-acid chain: Type-4 uracil-DNA glycosylase (192 aa).

Residues Cys18 and Cys21 each contribute to the [4Fe-4S] cluster site. Uracil-binding positions include 45–47 (GEG), Phe59, and Asn85. The [4Fe-4S] cluster site is built by Cys89 and Cys105. Residue His161 participates in uracil binding.

This sequence belongs to the uracil-DNA glycosylase (UDG) superfamily. Type 4 (UDGa) family.

It catalyses the reaction Hydrolyzes single-stranded DNA or mismatched double-stranded DNA and polynucleotides, releasing free uracil.. In terms of biological role, removes uracil bases that are present in DNA as a result of either deamination of cytosine or misincorporation of dUMP instead of dTMP. Can remove uracil from double-stranded DNA containing either a U/G or U/A base pair as well as from single-stranded DNA. The protein is Type-4 uracil-DNA glycosylase of Thermotoga maritima (strain ATCC 43589 / DSM 3109 / JCM 10099 / NBRC 100826 / MSB8).